Reading from the N-terminus, the 179-residue chain is Large ribosomal subunit protein uL6 (179 aa).

Belongs to the universal ribosomal protein uL6 family. As to quaternary structure, part of the 50S ribosomal subunit.

Its function is as follows. This protein binds to the 23S rRNA, and is important in its secondary structure. It is located near the subunit interface in the base of the L7/L12 stalk, and near the tRNA binding site of the peptidyltransferase center. This chain is Large ribosomal subunit protein uL6, found in Syntrophobacter fumaroxidans (strain DSM 10017 / MPOB).